Reading from the N-terminus, the 55-residue chain is MSTSRKLKTHGMRRGKNRAPHKGVKRGGSKRKYRKSVLKSRKRGDDASRNYRSHL.

A compositionally biased stretch (basic residues) spans 1-42 (MSTSRKLKTHGMRRGKNRAPHKGVKRGGSKRKYRKSVLKSRK). A disordered region spans residues 1-55 (MSTSRKLKTHGMRRGKNRAPHKGVKRGGSKRKYRKSVLKSRKRGDDASRNYRSHL). Ser36 and Ser40 each carry phosphoserine.

This sequence belongs to the nuclear transition protein 1 family. As to expression, testis-specific.

The protein resides in the nucleus. The protein localises to the chromosome. Its function is as follows. Plays a key role in the replacement of histones to protamine in the elongating spermatids of mammals. In condensing spermatids, loaded onto the nucleosomes, where it promotes the recruitment and processing of protamines, which are responsible for histone eviction. The histone H2AB1-H2BC1/TH2B dimer is required for loading of TNP1 onto chromatin. This chain is Spermatid nuclear transition protein 1, found in Mus musculus (Mouse).